We begin with the raw amino-acid sequence, 586 residues long: Kelch-like protein 7 (586 aa).

Residues 44–111 form the BTB domain; it reads CDVILMVQER…AYTARISVNS (68 aa). The 103-residue stretch at 146-248 folds into the BACK domain; that stretch reads CLGISVLAEC…SKNFLSKTVQ (103 aa). Kelch repeat units lie at residues 294–336, 337–382, 383–430, 431–481, 483–528, and 530–575; these read RIAL…FWDN, VVYI…AAEG, KIYT…EANG, LIYV…FVKD, IFAV…AVGS, and VYVL…CVVD.

Homodimer. Component of the BCR(KLHL7) E3 ubiquitin ligase complex.

It is found in the nucleus. The protein resides in the cytoplasm. It participates in protein modification; protein ubiquitination. In terms of biological role, substrate-specific adapter of a BCR (BTB-CUL3-RBX1) E3 ubiquitin ligase complex. The BCR(KLHL7) complex acts by mediating ubiquitination and subsequent degradation of substrate proteins. Probably mediates 'Lys-48'-linked ubiquitination. This chain is Kelch-like protein 7 (KLHL7), found in Gallus gallus (Chicken).